The primary structure comprises 819 residues: Myosin light chain kinase 3 (819 aa).

The disordered stretch occupies residues 146–460 (VPWRRGSPGD…PGVGNPEPEQ (315 aa)). A Phosphoserine modification is found at Ser152. Basic and acidic residues-rich tracts occupy residues 158–170 (EENK…EGAK) and 183–196 (DARE…KADV). Pro residues predominate over residues 307-318 (GPGPQCPGPPGL). Phosphoserine occurs at positions 355, 401, and 408. Residues 515 to 770 (VCQHEVLGGG…ATQCLKHEWL (256 aa)) form the Protein kinase domain. ATP-binding positions include 521 to 529 (LGGGRFGQV) and Lys544. The active-site Proton acceptor is the Asp636.

It belongs to the protein kinase superfamily. CAMK Ser/Thr protein kinase family. Mg(2+) is required as a cofactor. In terms of processing, phosphorylated on serine residues.

Its subcellular location is the cytoplasm. It catalyses the reaction L-seryl-[myosin light chain] + ATP = O-phospho-L-seryl-[myosin light chain] + ADP + H(+). The enzyme catalyses L-threonyl-[myosin light chain] + ATP = O-phospho-L-threonyl-[myosin light chain] + ADP + H(+). Functionally, kinase that phosphorylates MYL2 in vitro. Promotes sarcomere formation in cardiomyocytes and increases cardiomyocyte contractility. In Pongo abelii (Sumatran orangutan), this protein is Myosin light chain kinase 3 (MYLK3).